The chain runs to 793 residues: RNA-binding protein spenito (793 aa).

Disordered stretches follow at residues 1 to 93 (MSSH…PPAE) and 243 to 296 (HHDY…KKDK). A compositionally biased stretch (low complexity) spans 25 to 42 (SRSPGPASRSSLSRNSRS). Over residues 257–268 (RGGHPHHLHGHA) the composition is skewed to basic residues. Basic and acidic residues predominate over residues 285 to 296 (APYEKPESKKDK). 2 RRM domains span residues 314 to 391 (RTLF…YGKV) and 395 to 469 (TRMW…FAEL). The segment at 507 to 623 (YAPRGGYSPY…RNDALASAST (117 aa)) is disordered. Residues 526 to 536 (GGYRGRGRGMY) show a composition bias toward basic residues. Basic and acidic residues predominate over residues 566 to 593 (DEWRRPPGESYDRGARSSSREPGVERSR). Residues 624-791 (VPDVARKCST…HLVIVVVRGG (168 aa)) enclose the SPOC domain.

The protein belongs to the RRM Spen family. Component of the WMM complex, a N6-methyltransferase complex composed of a catalytic subcomplex, named MAC, and of an associated subcomplex, named MACOM. The MAC subcomplex is composed of Ime4/Mettl3 and Mettl14. The MACOM subcomplex is composed of fl(2)d, Flacc/Xio, Hakai, vir, and, in some cases of nito. Interacts with Sxl. Interacts with Hipk; leading to phosphorylation. Post-translationally, phosphorylated by Hipk at Ser-23, Ser-25 and/or Ser-27; the precise position if phosphorylation sites is unknown. In terms of tissue distribution, widely expressed. Shows some enrichment in the central nervous system.

The protein localises to the nucleus. RNA-binding protein that acts as an associated component of the WMM complex, a complex that mediates N6-methyladenosine (m6A) methylation of mRNAs. M6a modification plays a role in the efficiency of mRNA splicing and is required for sex determination. In the WMM complex, may act by binding target RNAs and recruiting the WMM complex. Required for sex determination and dosage compensation via Sxl alternative splicing: m6A methylation acts as a key regulator of Sxl pre-mRNA and promotes female-specific alternative splicing of Sxl, which determines female physiognomy. M6A methylation is also required for neuronal functions. Acts as a positive regulator of canonical Wg signaling during wing disk and eye development. The polypeptide is RNA-binding protein spenito (Drosophila melanogaster (Fruit fly)).